We begin with the raw amino-acid sequence, 201 residues long: Pyridoxal 5'-phosphate synthase subunit PdxT (201 aa).

49–51 (GES) provides a ligand contact to L-glutamine. Catalysis depends on Cys81, which acts as the Nucleophile. L-glutamine-binding positions include Arg110 and 139-140 (IR). Active-site charge relay system residues include His175 and Glu177.

This sequence belongs to the glutaminase PdxT/SNO family. As to quaternary structure, in the presence of PdxS, forms a dodecamer of heterodimers. Only shows activity in the heterodimer.

It carries out the reaction aldehydo-D-ribose 5-phosphate + D-glyceraldehyde 3-phosphate + L-glutamine = pyridoxal 5'-phosphate + L-glutamate + phosphate + 3 H2O + H(+). It catalyses the reaction L-glutamine + H2O = L-glutamate + NH4(+). It participates in cofactor biosynthesis; pyridoxal 5'-phosphate biosynthesis. Its function is as follows. Catalyzes the hydrolysis of glutamine to glutamate and ammonia as part of the biosynthesis of pyridoxal 5'-phosphate. The resulting ammonia molecule is channeled to the active site of PdxS. The sequence is that of Pyridoxal 5'-phosphate synthase subunit PdxT from Streptomyces avermitilis (strain ATCC 31267 / DSM 46492 / JCM 5070 / NBRC 14893 / NCIMB 12804 / NRRL 8165 / MA-4680).